Here is a 172-residue protein sequence, read N- to C-terminus: Thioredoxin Y1, chloroplastic (172 aa).

A chloroplast-targeting transit peptide spans 1-62; the sequence is MASISLSSST…SSTTRCTPRR (62 aa). A Thioredoxin domain is found at 63 to 169; sequence IEAKKQTFDS…LIQRIEDSLK (107 aa). Catalysis depends on nucleophile residues Cys-93 and Cys-96. An intrachain disulfide couples Cys-93 to Cys-96.

This sequence belongs to the thioredoxin family. Plant Y-type subfamily. In terms of tissue distribution, expressed in roots and seeds.

It is found in the plastid. Its subcellular location is the chloroplast stroma. Its function is as follows. Thiol-disulfide oxidoreductase that poorly activates chloroplastic malate dehydrogenase (NADP-MDH) and fructose-1,6-bisphosphatase. Provides reducing equivalents for peroxiredoxin Q. This Arabidopsis thaliana (Mouse-ear cress) protein is Thioredoxin Y1, chloroplastic.